The sequence spans 83 residues: MVMLIKCFLVTEKSVAELEKNVLTAIVDMRARKEHIKKEIEKLFNVEVERVNTLITPKGEKKAYIKLKPDYSAEEILSKLGVF.

Belongs to the universal ribosomal protein uL23 family. As to quaternary structure, part of the 50S ribosomal subunit. Contacts protein L29.

Functionally, binds to 23S rRNA. One of the proteins that surrounds the polypeptide exit tunnel on the outside of the ribosome. The polypeptide is Large ribosomal subunit protein uL23 (Archaeoglobus fulgidus (strain ATCC 49558 / DSM 4304 / JCM 9628 / NBRC 100126 / VC-16)).